The sequence spans 361 residues: Putative agmatine deiminase (361 aa).

The active-site Amidino-cysteine intermediate is the Cys354.

It belongs to the agmatine deiminase family.

The catalysed reaction is agmatine + H2O = N-carbamoylputrescine + NH4(+). The sequence is that of Putative agmatine deiminase from Streptococcus pneumoniae (strain ATCC 700669 / Spain 23F-1).